We begin with the raw amino-acid sequence, 353 residues long: Photosystem II protein D1 (353 aa).

Threonine 2 is modified (N-acetylthreonine). Threonine 2 carries the post-translational modification Phosphothreonine. Transmembrane regions (helical) follow at residues 29–46 (YIGW…TATS), 118–133 (HFLL…EWEL), and 142–156 (WIVV…AATA). Histidine 118 contacts chlorophyll a. Tyrosine 126 serves as a coordination point for pheophytin a. [CaMn4O5] cluster-binding residues include aspartate 170 and glutamate 189. A helical membrane pass occupies residues 197-218 (FHMLGVAGVFGGSLFSAMHGSL). Position 198 (histidine 198) interacts with chlorophyll a. A quinone-binding positions include histidine 215 and 264-265 (SF). Histidine 215 contributes to the Fe cation binding site. Position 272 (histidine 272) interacts with Fe cation. A helical membrane pass occupies residues 274–288 (FLAAWPVVGIWFTAL). Positions 332, 333, 342, and 344 each coordinate [CaMn4O5] cluster. Residues 345-353 (AVDAPSISG) constitute a propeptide that is removed on maturation.

It belongs to the reaction center PufL/M/PsbA/D family. PSII is composed of 1 copy each of membrane proteins PsbA, PsbB, PsbC, PsbD, PsbE, PsbF, PsbH, PsbI, PsbJ, PsbK, PsbL, PsbM, PsbT, PsbX, PsbY, PsbZ, Psb30/Ycf12, at least 3 peripheral proteins of the oxygen-evolving complex and a large number of cofactors. It forms dimeric complexes. The cofactor is The D1/D2 heterodimer binds P680, chlorophylls that are the primary electron donor of PSII, and subsequent electron acceptors. It shares a non-heme iron and each subunit binds pheophytin, quinone, additional chlorophylls, carotenoids and lipids. D1 provides most of the ligands for the Mn4-Ca-O5 cluster of the oxygen-evolving complex (OEC). There is also a Cl(-1) ion associated with D1 and D2, which is required for oxygen evolution. The PSII complex binds additional chlorophylls, carotenoids and specific lipids.. In terms of processing, tyr-161 forms a radical intermediate that is referred to as redox-active TyrZ, YZ or Y-Z. C-terminally processed by CTPA; processing is essential to allow assembly of the oxygen-evolving complex and thus photosynthetic growth.

Its subcellular location is the plastid. The protein localises to the chloroplast thylakoid membrane. The enzyme catalyses 2 a plastoquinone + 4 hnu + 2 H2O = 2 a plastoquinol + O2. Its function is as follows. Photosystem II (PSII) is a light-driven water:plastoquinone oxidoreductase that uses light energy to abstract electrons from H(2)O, generating O(2) and a proton gradient subsequently used for ATP formation. It consists of a core antenna complex that captures photons, and an electron transfer chain that converts photonic excitation into a charge separation. The D1/D2 (PsbA/PsbD) reaction center heterodimer binds P680, the primary electron donor of PSII as well as several subsequent electron acceptors. The polypeptide is Photosystem II protein D1 (Vicia faba (Broad bean)).